Consider the following 230-residue polypeptide: NAD(P)H-quinone oxidoreductase subunit K, chloroplastic (230 aa).

[4Fe-4S] cluster-binding residues include Cys-43, Cys-44, Cys-108, and Cys-139.

It belongs to the complex I 20 kDa subunit family. In terms of assembly, NDH is composed of at least 16 different subunits, 5 of which are encoded in the nucleus. Requires [4Fe-4S] cluster as cofactor.

The protein resides in the plastid. It localises to the chloroplast thylakoid membrane. The enzyme catalyses a plastoquinone + NADH + (n+1) H(+)(in) = a plastoquinol + NAD(+) + n H(+)(out). The catalysed reaction is a plastoquinone + NADPH + (n+1) H(+)(in) = a plastoquinol + NADP(+) + n H(+)(out). NDH shuttles electrons from NAD(P)H:plastoquinone, via FMN and iron-sulfur (Fe-S) centers, to quinones in the photosynthetic chain and possibly in a chloroplast respiratory chain. The immediate electron acceptor for the enzyme in this species is believed to be plastoquinone. Couples the redox reaction to proton translocation, and thus conserves the redox energy in a proton gradient. The chain is NAD(P)H-quinone oxidoreductase subunit K, chloroplastic from Lotus japonicus (Lotus corniculatus var. japonicus).